The primary structure comprises 550 residues: M-phase inducer phosphatase 1-B (550 aa).

2 disordered regions span residues 76–98 (NLGD…GKVE) and 285–335 (SPSM…QRRG). A compositionally biased stretch (basic and acidic residues) spans 290–310 (EKLDRPMLKRPVRPLDSETPV). Over residues 322 to 335 (LQPQEENFQPQRRG) the composition is skewed to polar residues. Positions 401 to 508 (LVEKIFIIDC…FFPEYKELCE (108 aa)) constitute a Rhodanese domain. Cysteine 457 is an active-site residue.

Belongs to the MPI phosphatase family.

It carries out the reaction O-phospho-L-tyrosyl-[protein] + H2O = L-tyrosyl-[protein] + phosphate. Its function is as follows. Tyrosine protein phosphatase which functions as a dosage-dependent inducer of mitotic progression. Directly dephosphorylates CDK1 and stimulates its kinase activity. The protein is M-phase inducer phosphatase 1-B (cdc25-1-b) of Xenopus laevis (African clawed frog).